The primary structure comprises 256 residues: Pimeloyl-[acyl-carrier protein] methyl ester esterase (256 aa).

The region spanning His15–Pro242 is the AB hydrolase-1 domain. Substrate is bound by residues Trp22, Ser82–Leu83, and Phe143–Gln147. The Nucleophile role is filled by Ser82. Active-site residues include Asp207 and His235. His235 provides a ligand contact to substrate.

It belongs to the AB hydrolase superfamily. Carboxylesterase BioH family. In terms of assembly, monomer.

It is found in the cytoplasm. The catalysed reaction is 6-carboxyhexanoyl-[ACP] methyl ester + H2O = 6-carboxyhexanoyl-[ACP] + methanol + H(+). Its pathway is cofactor biosynthesis; biotin biosynthesis. Functionally, the physiological role of BioH is to remove the methyl group introduced by BioC when the pimeloyl moiety is complete. It allows to synthesize pimeloyl-ACP via the fatty acid synthetic pathway through the hydrolysis of the ester bonds of pimeloyl-ACP esters. The chain is Pimeloyl-[acyl-carrier protein] methyl ester esterase from Escherichia coli O7:K1 (strain IAI39 / ExPEC).